We begin with the raw amino-acid sequence, 86 residues long: Centromere protein W (86 aa).

The protein belongs to the CENP-W/WIP1 family. Heterodimer with CENPT; this dimer coassembles with CENPS-CENPX heterodimers at centromeres to form the tetrameric CENP-T-W-S-X complex, which is a subcomplex of the large constitutive centromere-associated network (CCAN, also known as the interphase centromere complex or ICEN). Interacts with NPM1.

Its subcellular location is the nucleus. The protein localises to the chromosome. The protein resides in the centromere. It is found in the kinetochore. It localises to the nucleus matrix. Its subcellular location is the nucleolus. Its function is as follows. Component of the CENPA-NAC (nucleosome-associated) complex, a complex that plays a central role in assembly of kinetochore proteins, mitotic progression and chromosome segregation. The CENPA-NAC complex recruits the CENPA-CAD (nucleosome distal) complex and may be involved in incorporation of newly synthesized CENPA into centromeres. Part of a nucleosome-associated complex that binds specifically to histone H3-containing nucleosomes at the centromere, as opposed to nucleosomes containing CENPA. Component of the heterotetrameric CENP-T-W-S-X complex that binds and supercoils DNA, and plays an important role in kinetochore assembly. CENPW has a fundamental role in kinetochore assembly and function. It is one of the inner kinetochore proteins, with most further proteins binding downstream. Required for normal chromosome organization and normal progress through mitosis. This Rattus norvegicus (Rat) protein is Centromere protein W (Cenpw).